The following is a 145-amino-acid chain: Superoxide dismutase [Mn/Fe] (145 aa).

Fe(3+)-binding residues include His-10 and His-64. Mn(2+)-binding residues include His-10 and His-64.

It belongs to the iron/manganese superoxide dismutase family. The cofactor is Mn(2+). Fe(3+) serves as cofactor.

The enzyme catalyses 2 superoxide + 2 H(+) = H2O2 + O2. Destroys superoxide anion radicals which are normally produced within the cells and which are toxic to biological systems. Catalyzes the dismutation of superoxide anion radicals into O2 and H2O2 by successive reduction and oxidation of the transition metal ion at the active site. This Streptococcus acidominimus protein is Superoxide dismutase [Mn/Fe] (sodA).